We begin with the raw amino-acid sequence, 300 residues long: Delta-9 desaturase-like 4 protein (300 aa).

The next 2 helical transmembrane spans lie at 39-59 (VVVI…WEAL) and 61-81 (FGLV…HRNL). The Histidine box-1 motif lies at 78-83 (HRNLSH). Positions 115-119 (HRFHH) match the Histidine box-2 motif. Transmembrane regions (helical) follow at residues 175 to 195 (IAVH…LPYL) and 200 to 220 (GVGI…CHIW). The short motif at 247–251 (HNNHH) is the Histidine box-3 element.

The protein belongs to the fatty acid desaturase type 1 family. Fe cation is required as a cofactor.

The protein localises to the endoplasmic reticulum membrane. It functions in the pathway lipid metabolism; polyunsaturated fatty acid biosynthesis. The chain is Delta-9 desaturase-like 4 protein from Arabidopsis thaliana (Mouse-ear cress).